Here is a 212-residue protein sequence, read N- to C-terminus: Outer-membrane lipoprotein LolB (212 aa).

A signal peptide spans 1–16 (MACRSWVLGILLVLVG). Residue Cys-17 is the site of N-palmitoyl cysteine attachment. Cys-17 carries the S-diacylglycerol cysteine lipid modification.

It belongs to the LolB family. In terms of assembly, monomer.

Its subcellular location is the cell outer membrane. Functionally, plays a critical role in the incorporation of lipoproteins in the outer membrane after they are released by the LolA protein. The sequence is that of Outer-membrane lipoprotein LolB from Nitrosomonas europaea (strain ATCC 19718 / CIP 103999 / KCTC 2705 / NBRC 14298).